Consider the following 497-residue polypeptide: Putative glucuronosyltransferase PGSIP8 (497 aa).

The chain crosses the membrane as a helical span at residues 3–23; the sequence is LQRGFVFLSLVLSFMIIETTA. Asp-165 and Asp-167 together coordinate Mn(2+). The next 5 membrane-spanning stretches (helical) occupy residues 319–339, 365–385, 388–408, 418–438, and 442–462; these read YSAE…IIVV, GFKL…FFTI, TIHP…LSSI, LPVL…AFPW, and GVVR…FVWV.

This sequence belongs to the glycosyltransferase 8 family. Glycogenin subfamily. Requires Mn(2+) as cofactor.

It is found in the membrane. This chain is Putative glucuronosyltransferase PGSIP8 (PGSIP8), found in Arabidopsis thaliana (Mouse-ear cress).